The following is a 517-amino-acid chain: Probable mannosyltransferase KTR7 (517 aa).

Residues Met-1 to Gly-23 are Cytoplasmic-facing. The helical; Signal-anchor for type II membrane protein transmembrane segment at Phe-24–Ala-44 threads the bilayer. The interval Lys-45 to Tyr-85 is stem region. Residues Lys-45–Glu-517 are Lumenal-facing. The interval Ser-86–Glu-517 is catalytic. N-linked (GlcNAc...) asparagine glycans are attached at residues Asn-89 and Asn-144. The active-site Nucleophile is the Glu-367.

Belongs to the glycosyltransferase 15 family.

The protein localises to the membrane. Possible glycosyltransferase that transfers an alpha-D-mannosyl residue from GDP-mannose into lipid-linked oligosaccharide, forming an alpha-(1-&gt;2)-D-mannosyl-D-mannose linkage. The sequence is that of Probable mannosyltransferase KTR7 (KTR7) from Saccharomyces cerevisiae (strain ATCC 204508 / S288c) (Baker's yeast).